Consider the following 367-residue polypeptide: Coiled-coil domain-containing protein 34 (367 aa).

The residue at position 55 (Ser55) is a Phosphoserine. Disordered stretches follow at residues 77-105 (FPFG…KVES), 191-228 (QKKN…KAKE), and 310-349 (YNPI…SSLA). Residues 82–97 (DDSEGEDEEALDEDAR) show a composition bias toward acidic residues. Coiled-coil stretches lie at residues 87 to 108 (EDEE…SLEG) and 153 to 280 (RLQQ…AKNK). The span at 197–228 (ERKEREQKINKEMEEKEAKKREKEHLQEKAKE) shows a compositional bias: basic and acidic residues. The span at 339-349 (ASQPLPSSSLA) shows a compositional bias: low complexity.

In terms of tissue distribution, expressed in testis and sperm.

The protein resides in the cell projection. It is found in the cilium. It localises to the flagellum. Involved in spermatogenesis. Has a probable role in anterograde intraflagellar transport which is essential for the formation of sperm flagella. In Mus musculus (Mouse), this protein is Coiled-coil domain-containing protein 34 (Ccdc34).